A 307-amino-acid chain; its full sequence is Small ribosomal subunit biogenesis GTPase RsgA (307 aa).

Residues 80–237 form the CP-type G domain; sequence KADLRQTIVS…IVDTPGIKEF (158 aa). Residues 129 to 132 and 180 to 188 contribute to the GTP site; these read NKID and GQSGVGKSS. The Zn(2+) site is built by Cys-261, Cys-266, His-268, and Cys-274.

Belongs to the TRAFAC class YlqF/YawG GTPase family. RsgA subfamily. Monomer. Associates with 30S ribosomal subunit, binds 16S rRNA. Requires Zn(2+) as cofactor.

The protein resides in the cytoplasm. One of several proteins that assist in the late maturation steps of the functional core of the 30S ribosomal subunit. Helps release RbfA from mature subunits. May play a role in the assembly of ribosomal proteins into the subunit. Circularly permuted GTPase that catalyzes slow GTP hydrolysis, GTPase activity is stimulated by the 30S ribosomal subunit. The polypeptide is Small ribosomal subunit biogenesis GTPase RsgA (Borreliella burgdorferi (strain ATCC 35210 / DSM 4680 / CIP 102532 / B31) (Borrelia burgdorferi)).